Consider the following 247-residue polypeptide: Small ribosomal subunit protein uS3 (247 aa).

The 73-residue stretch at 39–111 folds into the KH type-2 domain; it reads IYDFFDKKVR…NISIQVIELK (73 aa). Residues 221–247 form a disordered region; the sequence is EEMDLLNAPKDRRVRRGGERHASTKKN. Positions 236-247 are enriched in basic and acidic residues; sequence RGGERHASTKKN.

Belongs to the universal ribosomal protein uS3 family. Part of the 30S ribosomal subunit. Forms a tight complex with proteins S10 and S14.

In terms of biological role, binds the lower part of the 30S subunit head. Binds mRNA in the 70S ribosome, positioning it for translation. The polypeptide is Small ribosomal subunit protein uS3 (Metamycoplasma arthritidis (strain 158L3-1) (Mycoplasma arthritidis)).